Consider the following 644-residue polypeptide: Exoribonuclease 2 (644 aa).

Residues 189-516 (RRDLTALNFV…NHRLLKAIVK (328 aa)) enclose the RNB domain. The S1 motif domain maps to 561–643 (DTRFAAEIID…ETRSIIARPV (83 aa)).

This sequence belongs to the RNR ribonuclease family. RNase II subfamily.

The protein resides in the cytoplasm. The enzyme catalyses Exonucleolytic cleavage in the 3'- to 5'-direction to yield nucleoside 5'-phosphates.. In terms of biological role, involved in mRNA degradation. Hydrolyzes single-stranded polyribonucleotides processively in the 3' to 5' direction. This is Exoribonuclease 2 from Enterobacter sp. (strain 638).